Consider the following 37-residue polypeptide: Cytochrome b6-f complex subunit 5 (37 aa).

The helical transmembrane segment at 5 to 25 (LLSGIVLGLIPITLFGLLVAA) threads the bilayer.

Belongs to the PetG family. The 4 large subunits of the cytochrome b6-f complex are cytochrome b6, subunit IV (17 kDa polypeptide, PetD), cytochrome f and the Rieske protein, while the 4 small subunits are PetG, PetL, PetM and PetN. The complex functions as a dimer.

The protein resides in the plastid. Its subcellular location is the chloroplast thylakoid membrane. Functionally, component of the cytochrome b6-f complex, which mediates electron transfer between photosystem II (PSII) and photosystem I (PSI), cyclic electron flow around PSI, and state transitions. PetG is required for either the stability or assembly of the cytochrome b6-f complex. In Pyropia yezoensis (Susabi-nori), this protein is Cytochrome b6-f complex subunit 5.